The primary structure comprises 168 residues: Small ribosomal subunit protein uS7c (168 aa).

It belongs to the universal ribosomal protein uS7 family. As to quaternary structure, part of the 30S ribosomal subunit.

Its subcellular location is the plastid. It localises to the chloroplast. Its function is as follows. One of the primary rRNA binding proteins, it binds directly to 16S rRNA where it nucleates assembly of the head domain of the 30S subunit. The sequence is that of Small ribosomal subunit protein uS7c (rps7) from Chlamydomonas reinhardtii (Chlamydomonas smithii).